The sequence spans 376 residues: UPF0754 membrane protein Sca_1420 (376 aa).

Transmembrane regions (helical) follow at residues 4–24 and 356–376; these read FLVI…TNII and LLGF…ALFV.

Belongs to the UPF0754 family.

Its subcellular location is the cell membrane. The polypeptide is UPF0754 membrane protein Sca_1420 (Staphylococcus carnosus (strain TM300)).